The primary structure comprises 635 residues: MIQITLPDSSKRDYSGPVTVAEVAASIGTGLAKAALGGKVDGKLVDTSFLISQDSALSIVTAKDAEGLELIRHSAAHLLAYAVKELFPEAQVTIGPVIENGFFYDFSYKRPFTPEDLVAIEKRMAELVAKDEPVTRRVLPRDEAVAYFKSLGEYYKAEIIASIPANEDVSLYREGKFEDLCRGPHVPSTGKLKFFKLMKVAGAYWRGDHHNEMLQRIYGTAWATKDELQQYLTMLEEADKRDHRKLGKELDLFHIDDHSPGLVFWHPKGWTVWQGVEQYMRKVYQNNGYQEVKGPQLLDKTLWEKTGHWDKYRDNMFTTESEKRDFALKPMNCPGHILIFKQGIKSYRDLPLRYGEFGQCHRNEPTGGLHGIMRVRGFTQDDGHIFCTEEQILKECVDYTTLLQKVYTDFGFKNIIYKVATRPEARIGSDESWDKAEHALIESLRASGCEFEISPGEGAFYGPKIEYTLKDAIGRQWQCGTIQVDFSMPERLDAEYVGEDGARHRPVMLHRAIVGSLERFIGILIEEHAGALPTWLAPEQVSVLTITDSQAEYARGVAKTLQNQGLRVNLDLRNEKITYKIREHSLQKLPFILVVGDKEMAAGAVSVRARGNKDLGVMSLEAFAERIASDIAQKA.

Residues 1 to 61 form the TGS domain; that stretch reads MIQITLPDSS…SQDSALSIVT (61 aa). The segment at 242–533 is catalytic; sequence DHRKLGKELD…LIEEHAGALP (292 aa). Residues cysteine 333, histidine 384, and histidine 510 each contribute to the Zn(2+) site.

Belongs to the class-II aminoacyl-tRNA synthetase family. In terms of assembly, homodimer. It depends on Zn(2+) as a cofactor.

The protein localises to the cytoplasm. It carries out the reaction tRNA(Thr) + L-threonine + ATP = L-threonyl-tRNA(Thr) + AMP + diphosphate + H(+). In terms of biological role, catalyzes the attachment of threonine to tRNA(Thr) in a two-step reaction: L-threonine is first activated by ATP to form Thr-AMP and then transferred to the acceptor end of tRNA(Thr). Also edits incorrectly charged L-seryl-tRNA(Thr). This chain is Threonine--tRNA ligase, found in Polaromonas naphthalenivorans (strain CJ2).